The sequence spans 421 residues: Vasopressin V1b receptor (421 aa).

Topologically, residues 1-35 (MDSEPSWTATPSPGGTLFVPNTTTPWLGRDEELAK) are extracellular. Residue Asn-21 is glycosylated (N-linked (GlcNAc...) asparagine). The chain crosses the membrane as a helical span at residues 36-59 (VEIGILATVLVLATGGNLAVLLIL). Over 60-71 (GLQGHKRSRMHL) the chain is Cytoplasmic. The chain crosses the membrane as a helical span at residues 72-93 (FVLHLALTDLGVALFQVLPQLL). Topologically, residues 94–108 (WDITYRFQGSDLLCR) are extracellular. A disulfide bridge links Cys-107 with Cys-186. A helical transmembrane segment spans residues 109 to 130 (AVKYLQVLSMFASTYMLLAMTL). Residues 131–151 (DRYLAVCHPLRSLQQPSQSTY) lie on the Cytoplasmic side of the membrane. Residues 152–173 (PLIAAPWLLAAILSLPQVFIFS) form a helical membrane-spanning segment. At 174–202 (LREVIQGSGVLDCWADFYFSWGPRAYITW) the chain is on the extracellular side. A helical membrane pass occupies residues 203–223 (TTMAIFVLPVVVLTACYGLIC). Over 224 to 280 (HEIYKNLKVKTQAGREERRGWPKSSSSAAAAATRGLPSRVSSISTISRAKIRTVKMT) the chain is Cytoplasmic. A helical membrane pass occupies residues 281–300 (FVIVLAYIACWAPFFSVQMW). The Extracellular segment spans residues 301–318 (SVWDENAPNEDSTNVAFT). A helical transmembrane segment spans residues 319–338 (ISMLLGNLSSCCNPWIYMGF). Over 339 to 421 (NSHLLPRSLS…GEATMETSIS (83 aa)) the chain is Cytoplasmic. Residues 399-421 (KPAGSLKDLEQVDGEATMETSIS) are disordered.

Belongs to the G-protein coupled receptor 1 family. Vasopressin/oxytocin receptor subfamily.

The protein localises to the cell membrane. Its function is as follows. Receptor for arginine vasopressin. The activity of this receptor is mediated by G proteins which activate a phosphatidyl-inositol-calcium second messenger system. The chain is Vasopressin V1b receptor (Avpr1b) from Mus musculus (Mouse).